Consider the following 426-residue polypeptide: 3-phosphoshikimate 1-carboxyvinyltransferase (426 aa).

Positions 21, 22, and 26 each coordinate 3-phosphoshikimate. Lys-21 lines the phosphoenolpyruvate pocket. Phosphoenolpyruvate contacts are provided by Gly-92 and Arg-122. 3-phosphoshikimate is bound by residues Ser-167, Ser-168, Gln-169, Ser-195, Asp-315, and Lys-342. Gln-169 contributes to the phosphoenolpyruvate binding site. The Proton acceptor role is filled by Asp-315. The phosphoenolpyruvate site is built by Arg-346 and Arg-386.

The protein belongs to the EPSP synthase family. As to quaternary structure, monomer.

It is found in the cytoplasm. It catalyses the reaction 3-phosphoshikimate + phosphoenolpyruvate = 5-O-(1-carboxyvinyl)-3-phosphoshikimate + phosphate. Its pathway is metabolic intermediate biosynthesis; chorismate biosynthesis. In terms of biological role, catalyzes the transfer of the enolpyruvyl moiety of phosphoenolpyruvate (PEP) to the 5-hydroxyl of shikimate-3-phosphate (S3P) to produce enolpyruvyl shikimate-3-phosphate and inorganic phosphate. This is 3-phosphoshikimate 1-carboxyvinyltransferase from Methanosphaera stadtmanae (strain ATCC 43021 / DSM 3091 / JCM 11832 / MCB-3).